Consider the following 520-residue polypeptide: MECPHLSSSVCIAPDSAKFPNGSPSSWCCSVCRSNKSPWVCLTCSSVHCGRYVNGHAKKHYEDAQIPLLNHKRSEKQEKAQHTVCMDCSSYSTYCYRCDDFVVNDTKLGLVQKVREHLQNLENSAFTADRHRKRKLLENSSLNSKLLKVNGSTTAICATGLRNLGNTCFMNAILQSLSNIEQFCCYFKELPAVELRNGKTAGRRTYHTRSQGDSNVSLVEEFRKTLCALWQGSQTAFSPESLFYVVWKIMPNFRGYQQQDAHEFMRYLLDHLHLELQGGFNGVSRSAILQENSTLSASNKCCINGASTVVTAIFGGILQNEVNCLICGTESRKFDPFLDLSLDIPSQFRSKRSKNQENGPVCSLRDCLRSFTDLEELDETELYMCHKCKKKQKSTKKFWIQKLPKALCLHLKRFHWTAYLRNKVDTYVQFPLRGLDMKCYLLEPENSGPDSCLYDLAAVVVHHGSGVGSGHYTAYAVHEGRWFHFNDSTVTVTDEETVGKAKAYILFYVERQARAGAEKL.

Met-1 is subject to N-acetylmethionine. The UBP-type zinc-finger motif lies at 1 to 121; that stretch reads MECPHLSSSV…QKVREHLQNL (121 aa). Zn(2+)-binding residues include Cys-3, His-5, Cys-29, Cys-32, Cys-41, Cys-44, Cys-49, His-56, His-60, His-82, Cys-95, and Cys-98. Residues 159-511 form the USP domain; it reads TGLRNLGNTC…KAYILFYVER (353 aa). The Nucleophile role is filled by Cys-168. His-471 serves as the catalytic Proton acceptor.

The protein belongs to the peptidase C19 family. USP3 subfamily. As to quaternary structure, interacts (via UBP-type domain) with H2A; the interaction is less efficient than with monoubiquitinated H2A.

Its subcellular location is the nucleus. It localises to the cytoplasm. It catalyses the reaction Thiol-dependent hydrolysis of ester, thioester, amide, peptide and isopeptide bonds formed by the C-terminal Gly of ubiquitin (a 76-residue protein attached to proteins as an intracellular targeting signal).. Deubiquitinase that plays a role in several cellular processes including transcriptional regulation, cell cycle progression or innate immunity. In response to DNA damage, deubiquitinates monoubiquitinated target proteins such as histone H2A and H2AX and thereby counteracts RNF168- and RNF8-mediated ubiquitination. In turn, participates in the recruitment of DNA damage repair factors to DNA break sites. Required for proper progression through S phase and subsequent mitotic entry. Acts as a positive regulator of TP53 by deubiquitinating and stabilizing it to promote normal cell proliferation and transformation. Participates in establishing tolerance innate immune memory through non-transcriptional feedback. Mechanistically, negatively regulates TLR-induced NF-kappa-B signaling by targeting and removing the 'Lys-63'-linked polyubiquitin chains on MYD88. Negatively regulates the activation of type I interferon signaling by mediating 'Lys-63'-linked polyubiquitin chains on RIGI and IFIH1. Also deubiquinates ASC/PYCARD, the central adapter mediating the assembly and activation of most inflammasomes, and thereby promotes inflammasome activation. In Mus musculus (Mouse), this protein is Ubiquitin carboxyl-terminal hydrolase 3 (Usp3).